Here is a 506-residue protein sequence, read N- to C-terminus: Galactose/methyl galactoside import ATP-binding protein MglA (506 aa).

ABC transporter domains are found at residues 14–249 (LEMS…VGRS) and 264–506 (VILE…SLHL). Residue 46–53 (GENGAGKS) coordinates ATP.

Belongs to the ABC transporter superfamily. Galactose/methyl galactoside importer (TC 3.A.1.2.3) family. The complex is composed of one ATP-binding protein (MglA), two transmembrane proteins (MglC) and a solute-binding protein (MglB).

It localises to the cell inner membrane. It catalyses the reaction D-galactose(out) + ATP + H2O = D-galactose(in) + ADP + phosphate + H(+). The enzyme catalyses methyl beta-D-galactoside(out) + ATP + H2O = methyl beta-D-galactoside(in) + ADP + phosphate + H(+). Its function is as follows. Part of the ABC transporter complex MglABC involved in galactose/methyl galactoside import. Responsible for energy coupling to the transport system. The chain is Galactose/methyl galactoside import ATP-binding protein MglA from Escherichia coli O6:K15:H31 (strain 536 / UPEC).